The primary structure comprises 383 residues: tRNA-specific 2-thiouridylase MnmA (383 aa).

ATP contacts are provided by residues 31–38 (GLSGGVDS) and leucine 57. Cysteine 118 (nucleophile) is an active-site residue. Cysteine 118 and cysteine 217 are disulfide-bonded. Glycine 143 is a binding site for ATP. Residues 167 to 169 (KDQ) are interaction with tRNA. The active-site Cysteine persulfide intermediate is the cysteine 217. Residues 322–323 (RY) are interaction with tRNA.

It belongs to the MnmA/TRMU family.

It is found in the cytoplasm. The enzyme catalyses S-sulfanyl-L-cysteinyl-[protein] + uridine(34) in tRNA + AH2 + ATP = 2-thiouridine(34) in tRNA + L-cysteinyl-[protein] + A + AMP + diphosphate + H(+). Its function is as follows. Catalyzes the 2-thiolation of uridine at the wobble position (U34) of tRNA, leading to the formation of s(2)U34. The protein is tRNA-specific 2-thiouridylase MnmA of Synechococcus sp. (strain RCC307).